The sequence spans 158 residues: Small ribosomal subunit protein uS7 (158 aa).

This sequence belongs to the universal ribosomal protein uS7 family. Part of the 30S ribosomal subunit. Contacts proteins S9 and S11.

Functionally, one of the primary rRNA binding proteins, it binds directly to 16S rRNA where it nucleates assembly of the head domain of the 30S subunit. Is located at the subunit interface close to the decoding center, probably blocks exit of the E-site tRNA. This Wolbachia pipientis subsp. Culex pipiens (strain wPip) protein is Small ribosomal subunit protein uS7.